The following is a 232-amino-acid chain: Ribonuclease P protein component 3 (232 aa).

This sequence belongs to the eukaryotic/archaeal RNase P protein component 3 family. Consists of a catalytic RNA component and at least 4-5 protein subunits.

Its subcellular location is the cytoplasm. The catalysed reaction is Endonucleolytic cleavage of RNA, removing 5'-extranucleotides from tRNA precursor.. Part of ribonuclease P, a protein complex that generates mature tRNA molecules by cleaving their 5'-ends. This is Ribonuclease P protein component 3 from Halobacterium salinarum (strain ATCC 29341 / DSM 671 / R1).